Reading from the N-terminus, the 200-residue chain is MRTSGLLEQLMESLRCLPGVGPKSAQRMAFHLLQRNRQGGMQLADALSRAMSEIGHCSECRTFTEEDTCAICLNPKRQMNGELCIVESPADIVAVEATGQFSGRYFVLMGHLSPLDGIGPSDIGLDLLDHRLGRGDIKEVILATNPTVEGEATAHYIAEICQEHHVSASRIAHGVPMGGELELVDGTTLSHSILGRQKLY.

The C4-type zinc-finger motif lies at 57 to 72 (CSECRTFTEEDTCAIC). In terms of domain architecture, Toprim spans 81-176 (GELCIVESPA…SASRIAHGVP (96 aa)).

Belongs to the RecR family.

Its function is as follows. May play a role in DNA repair. It seems to be involved in an RecBC-independent recombinational process of DNA repair. It may act with RecF and RecO. This Aliivibrio salmonicida (strain LFI1238) (Vibrio salmonicida (strain LFI1238)) protein is Recombination protein RecR.